We begin with the raw amino-acid sequence, 363 residues long: Cobalt-precorrin-5B C(1)-methyltransferase (363 aa).

This sequence belongs to the CbiD family.

The enzyme catalyses Co-precorrin-5B + S-adenosyl-L-methionine = Co-precorrin-6A + S-adenosyl-L-homocysteine. The protein operates within cofactor biosynthesis; adenosylcobalamin biosynthesis; cob(II)yrinate a,c-diamide from sirohydrochlorin (anaerobic route): step 6/10. Its function is as follows. Catalyzes the methylation of C-1 in cobalt-precorrin-5B to form cobalt-precorrin-6A. This chain is Cobalt-precorrin-5B C(1)-methyltransferase, found in Burkholderia pseudomallei (strain K96243).